The chain runs to 311 residues: Malate dehydrogenase (311 aa).

NAD(+) contacts are provided by residues G7–G13 and D34. Residues R81 and R87 each contribute to the substrate site. NAD(+)-binding positions include N94 and I117–N119. 2 residues coordinate substrate: N119 and R153. Residue H177 is the Proton acceptor of the active site. An NAD(+)-binding site is contributed by M227.

The protein belongs to the LDH/MDH superfamily. MDH type 1 family. In terms of assembly, homodimer.

It catalyses the reaction (S)-malate + NAD(+) = oxaloacetate + NADH + H(+). Its function is as follows. Catalyzes the reversible oxidation of malate to oxaloacetate. In Vibrio cholerae serotype O1 (strain ATCC 39315 / El Tor Inaba N16961), this protein is Malate dehydrogenase (mdh).